A 76-amino-acid polypeptide reads, in one-letter code: Small ribosomal subunit protein bS16 (76 aa).

Belongs to the bacterial ribosomal protein bS16 family.

The protein is Small ribosomal subunit protein bS16 of Helicobacter pylori (strain HPAG1).